We begin with the raw amino-acid sequence, 275 residues long: Tryptophan synthase alpha chain (275 aa).

Residues Glu51 and Glu62 each act as proton acceptor in the active site.

Belongs to the TrpA family. As to quaternary structure, tetramer of two alpha and two beta chains.

The catalysed reaction is (1S,2R)-1-C-(indol-3-yl)glycerol 3-phosphate + L-serine = D-glyceraldehyde 3-phosphate + L-tryptophan + H2O. It participates in amino-acid biosynthesis; L-tryptophan biosynthesis; L-tryptophan from chorismate: step 5/5. Its function is as follows. The alpha subunit is responsible for the aldol cleavage of indoleglycerol phosphate to indole and glyceraldehyde 3-phosphate. The chain is Tryptophan synthase alpha chain from Caulobacter sp. (strain K31).